A 581-amino-acid polypeptide reads, in one-letter code: MSGGDGRGHNTGAHSTSGNINGGPTGLGVGGGASDGSGWSSENNPWGGGSGSGIHWGGGSGHGNGGGNGNSGGGSGTGGNLSAVAAPVAFGFPALSTPGAGGLAVSISAGALSAAIADIMAALKGPFKFGLWGVALYGVLPSQIAKDDPNMMSKIVTSLPADDITESPVSSLPLDKATVNVNVRVVDDVKDERQNISVVSGVPMSVPVVDAKPTERPGVFTASIPGAPVLNISVNNSTPEVQTLSPGVTNNTDKDVRPAGFTQGGNTRDAVIRFPKDSGHNAVYVSVSDVLSPDQVKQRQDEENRRQQEWDATHPVEAAERNYERARAELNQANEDVARNQERQAKAVQVYNSRKSELDAANKTLADAIAEIKQFNRFAHDPMAGGHRMWQMAGLKAQRAQTDVNNKQAAFDAAAKEKSDADAALSAAQERRKQKENKEKDAKDKLDKESKRNKPGKATGKGKPVGDKWLDDAGKDSGAPIPDRIADKLRDKEFKNFDDFRKKFWEEVSKDPDLSKQFKGSNKTNIQKGKAPFARKKDQVGGRERFELHHDKPISQDGGVYDMNNIRVTTPKRHIDIHRGK.

Disordered regions lie at residues methionine 1–glycine 74, glutamine 242–aspartate 269, proline 293–glutamate 320, alanine 421–lysine 488, and aspartate 513–isoleucine 566. A compositionally biased stretch (gly residues) spans isoleucine 20–aspartate 35. Residues glycine 36–proline 45 are compositionally biased toward low complexity. Positions tryptophan 46–glycine 74 are enriched in gly residues. Over residues glutamine 242 to asparagine 251 the composition is skewed to polar residues. Basic and acidic residues-rich tracts occupy residues valine 296 to glutamate 320, glutamine 429 to arginine 452, and proline 464 to lysine 475. Residues phenylalanine 518 to glutamine 527 are compositionally biased toward polar residues. A compositionally biased stretch (basic and acidic residues) spans arginine 535 to isoleucine 554. Residues histidine 549, histidine 574, and histidine 578 each coordinate Zn(2+).

Belongs to the colicin/pyosin nuclease family.

Functionally, this plasmid-coded bactericidal protein is an endonuclease active on both single- and double-stranded DNA but with undefined specificity. Its function is as follows. Colicins are polypeptide toxins produced by and active against E.coli and closely related bacteria. This Escherichia coli protein is Colicin-E2 (col).